A 215-amino-acid chain; its full sequence is Nucleoredoxin-like protein 1 (215 aa).

Positions 1-164 constitute a Thioredoxin; atypical domain; the sequence is MVDLFLGKVL…GAELIDRNFM (164 aa). Positions 190 to 215 are disordered; sequence DEKKKKKKRDDDDDDDDGGGGGGPWG.

This sequence belongs to the nucleoredoxin family.

It is found in the cell projection. Its subcellular location is the cilium. The protein localises to the photoreceptor outer segment. Plays an important role in retinal cone photoreceptor survival. May play a role in cone cell viability, slowing down cone degeneration, does not seem to play a role in degenerating rods. In Danio rerio (Zebrafish), this protein is Nucleoredoxin-like protein 1 (nxnl1).